A 725-amino-acid polypeptide reads, in one-letter code: ABC transporter G family member 19 (725 aa).

The ABC transporter domain occupies Leu-73–Glu-325. Gly-117–Ser-124 is an ATP binding site. An ABC transmembrane type-2 domain is found at Phe-419–Phe-629. 7 consecutive transmembrane segments (helical) span residues Leu-438 to Trp-458, Leu-473 to Ile-493, Ile-515 to Ile-535, Phe-537 to Tyr-557, Ile-577 to Phe-597, Phe-606 to Ile-626, and Leu-698 to Phe-718.

This sequence belongs to the ABC transporter superfamily. ABCG family. Eye pigment precursor importer (TC 3.A.1.204) subfamily.

It is found in the vacuole membrane. Confers selective resistance to kanamycin. This chain is ABC transporter G family member 19 (ABCG19), found in Arabidopsis thaliana (Mouse-ear cress).